Reading from the N-terminus, the 375-residue chain is Serine protease 23 (375 aa).

The signal sequence occupies residues 1 to 23; the sequence is MAGTPGHPIFLLLLLRAIGQVSP. N-linked (GlcNAc...) asparagine glycosylation occurs at Asn-93. Cys-153 and Cys-169 are disulfide-bonded. The active-site Charge relay system is the His-168. Asn-199 carries N-linked (GlcNAc...) asparagine glycosylation. Catalysis depends on charge relay system residues Asp-232 and Ser-308.

The protein belongs to the peptidase S1 family.

It is found in the secreted. The polypeptide is Serine protease 23 (PRSS23) (Bos taurus (Bovine)).